The chain runs to 145 residues: Protein phosphatase 1 regulatory subunit 14D (145 aa).

Over residues 1-14 (MLSSSPASCTSPSP) the composition is skewed to low complexity. The tract at residues 1-59 (MLSSSPASCTSPSPDGENPCKKVHWASGRRRTSSTDSESKSHPDSSKIPRSRRPSRLTV) is disordered. The segment at 21 to 25 (KKVHW) is interaction with protein phosphatase 1. A compositionally biased stretch (basic residues) spans 21–32 (KKVHWASGRRRT). Residues 37–47 (SESKSHPDSSK) are compositionally biased toward basic and acidic residues. Threonine 58 bears the Phosphothreonine mark.

This sequence belongs to the PP1 inhibitor family. In terms of processing, phosphorylated on several residues. In terms of tissue distribution, detected in colon, intestine, kidney and brain cortex.

The protein localises to the cytoplasm. Its function is as follows. Inhibitor of PPP1CA. Has inhibitory activity only when phosphorylated, creating a molecular switch for regulating the phosphorylation status of PPP1CA substrates and smooth muscle contraction. The protein is Protein phosphatase 1 regulatory subunit 14D (PPP1R14D) of Homo sapiens (Human).